Reading from the N-terminus, the 888-residue chain is Alanine--tRNA ligase (888 aa).

Positions 564, 568, 676, and 680 each coordinate Zn(2+).

Belongs to the class-II aminoacyl-tRNA synthetase family. Zn(2+) serves as cofactor.

The protein resides in the cytoplasm. The catalysed reaction is tRNA(Ala) + L-alanine + ATP = L-alanyl-tRNA(Ala) + AMP + diphosphate. Catalyzes the attachment of alanine to tRNA(Ala) in a two-step reaction: alanine is first activated by ATP to form Ala-AMP and then transferred to the acceptor end of tRNA(Ala). Also edits incorrectly charged Ser-tRNA(Ala) and Gly-tRNA(Ala) via its editing domain. This chain is Alanine--tRNA ligase, found in Bartonella quintana (strain Toulouse) (Rochalimaea quintana).